Here is a 242-residue protein sequence, read N- to C-terminus: uncharacterized protein (242 aa).

This is an uncharacterized protein from Aquifex aeolicus (strain VF5).